A 349-amino-acid polypeptide reads, in one-letter code: tRNA N6-adenosine threonylcarbamoyltransferase (349 aa).

2 residues coordinate Fe cation: H117 and H121. Substrate contacts are provided by residues 139–143 (QVSGG), D172, G185, D189, and N278. D310 provides a ligand contact to Fe cation.

It belongs to the KAE1 / TsaD family. It depends on Fe(2+) as a cofactor.

The protein localises to the cytoplasm. It carries out the reaction L-threonylcarbamoyladenylate + adenosine(37) in tRNA = N(6)-L-threonylcarbamoyladenosine(37) in tRNA + AMP + H(+). Its function is as follows. Required for the formation of a threonylcarbamoyl group on adenosine at position 37 (t(6)A37) in tRNAs that read codons beginning with adenine. Is involved in the transfer of the threonylcarbamoyl moiety of threonylcarbamoyl-AMP (TC-AMP) to the N6 group of A37, together with TsaE and TsaB. TsaD likely plays a direct catalytic role in this reaction. In Lactobacillus acidophilus (strain ATCC 700396 / NCK56 / N2 / NCFM), this protein is tRNA N6-adenosine threonylcarbamoyltransferase.